A 1416-amino-acid chain; its full sequence is Uveal autoantigen with coiled-coil domains and ankyrin repeats (1416 aa).

At Met1 the chain carries N-acetylmethionine. The segment at 1-24 (MKSLKSRLRRQDVPGPASSGAAAA) is disordered. 6 ANK repeats span residues 38–66 (LMKAAERGDVEKVTSILAKKGVNPGKLDV), 67–96 (EGRSVFHVVTSKGNLECLNAILIHGVDITT), 100–129 (AGRNALHLAAKYGHALCLQKLLQYNCPTEH), 133–162 (QGRTALHDAAMADCPSSIQLLCDHGASVNA), 166–195 (DGRTPLVLATQMSRPTICQLLIDRGADVNS), and 199–228 (QNRTALMLGCEYGCRDAVEVLIKNGADISL). Coiled coils occupy residues 286-374 (VKSH…NRFK) and 438-1386 (ENEI…IYRT). Lys1035 is covalently cross-linked (Glycyl lysine isopeptide (Lys-Gly) (interchain with G-Cter in SUMO2)).

As to quaternary structure, component of the apoptosome complex, composed of APAF1, pro-caspase-9 and UACA. In the complex, it probably interacts directly with APAF1. Interacts with LGALS3, ARF6 and ACTB. Interacts with RAB39A. In terms of tissue distribution, highly expressed in skeletal muscle, heart, kidney and pancreas. Expressed in choroid, retina and epidermal melanocytes. Expressed in eye muscles and thyroid follicular cells.

The protein localises to the nucleus. It is found in the cytoplasm. The protein resides in the cytoskeleton. Regulates APAF1 expression and plays an important role in the regulation of stress-induced apoptosis. Promotes apoptosis by regulating three pathways, apoptosome up-regulation, LGALS3/galectin-3 down-regulation and NF-kappa-B inactivation. Regulates the redistribution of APAF1 into the nucleus after proapoptotic stress. Down-regulates the expression of LGALS3 by inhibiting NFKB1. Its function is as follows. Modulates isoactin dynamics to regulate the morphological alterations required for cell growth and motility. Interaction with ARF6 may modulate cell shape and motility after injury. May be involved in multiple neurite formation. In Homo sapiens (Human), this protein is Uveal autoantigen with coiled-coil domains and ankyrin repeats (UACA).